The sequence spans 225 residues: PKHD-type hydroxylase KPK_3192 (225 aa).

One can recognise a Fe2OG dioxygenase domain in the interval threonine 78–serine 177. Residues histidine 96, aspartate 98, and histidine 158 each contribute to the Fe cation site. Arginine 168 contributes to the 2-oxoglutarate binding site.

The cofactor is Fe(2+). Requires L-ascorbate as cofactor.

The chain is PKHD-type hydroxylase KPK_3192 from Klebsiella pneumoniae (strain 342).